The following is a 526-amino-acid chain: Lysine--tRNA ligase (526 aa).

Residues Glu-431 and Glu-438 each coordinate Mg(2+).

Belongs to the class-II aminoacyl-tRNA synthetase family. As to quaternary structure, homodimer. Mg(2+) serves as cofactor.

Its subcellular location is the cytoplasm. The enzyme catalyses tRNA(Lys) + L-lysine + ATP = L-lysyl-tRNA(Lys) + AMP + diphosphate. This Chlamydia felis (strain Fe/C-56) (Chlamydophila felis) protein is Lysine--tRNA ligase.